A 407-amino-acid polypeptide reads, in one-letter code: Protein ZNF365 (407 aa).

Phosphoserine is present on serine 16. Residues 26 to 51 (FRCPRCGDHTRFRSLSSLRAHLEFSH) form a C2H2-type; degenerate zinc finger. Phosphoserine is present on serine 138. Residues 169–296 (VEAVDRTIEK…KQLEYYQSQQ (128 aa)) adopt a coiled-coil conformation. Threonine 175 carries the post-translational modification Phosphothreonine. The disordered stretch occupies residues 347-392 (LKKAKDDRASMQPAKAIHEQAESSRDLCRPPKKGELLGFGRKGNIR). The segment covering 362–381 (AIHEQAESSRDLCRPPKKGE) has biased composition (basic and acidic residues). Phosphoserine is present on serine 369.

As to quaternary structure, homodimers. Interacts with NDE1 and NDEL1. Interacts with DISC1. Interacts with PARP1. Interacts with MCRS1.

The protein resides in the cytoplasm. Its subcellular location is the cytoskeleton. It is found in the microtubule organizing center. The protein localises to the centrosome. Its function is as follows. Involved in the regulation of neurogenesis. Negatively regulates neurite outgrowth. Involved in the morphogenesis of basket cells in the somatosensory cortex during embryogenesis. Involved in the positive regulation of oligodendrocyte differentiation during postnatal growth. Involved in dendritic arborization, morphogenesis of spine density dendrite, and establishment of postsynaptic dendrite density in cortical pyramidal neurons. Involved in homologous recombination (HR) repair pathway. Required for proper resolution of DNA double-strand breaks (DSBs) by HR. Is required for recovery of stalled replication forks, and directly contributes to genomic stability. Interacts with PARP1 and mediates MRE11-dependent DNA end resection during replication fork recovery. Contributes to genomic stability by preventing telomere dysfunction. The chain is Protein ZNF365 (ZNF365) from Pongo abelii (Sumatran orangutan).